The sequence spans 103 residues: U-scoloptoxin(24)-Er1a (103 aa).

The signal sequence occupies residues 1–23 (MVKSLHCLIGIVLFLAILNAGNG).

This sequence belongs to the scoloptoxin-24 family. In terms of processing, contains 1 disulfide bond. As to expression, expressed by the venom gland.

It localises to the secreted. The polypeptide is U-scoloptoxin(24)-Er1a (Ethmostigmus rubripes (Giant centipede)).